A 553-amino-acid chain; its full sequence is Protein spartin (553 aa).

Positions 15-96 (IRTAYKAAMT…ETELRYRLKV (82 aa)) constitute an MIT domain. A disordered region spans residues 105–130 (DDSAVEATEESRAEMDTKRPPLLAEN). The segment covering 113–123 (EESRAEMDTKR) has biased composition (basic and acidic residues). Positions 325-509 (IVSAADFIAS…SQNVNYITPK (185 aa)) constitute a Senescence domain.

As to quaternary structure, interacts with Eps-15 (via C-terminal region); the interaction is required for spartin localization to the NMJ presynaptic membrane. As to expression, expressed in larval brain, ventral nerve cord and neuropil (at protein level).

It is found in the presynaptic cell membrane. Its subcellular location is the early endosome. It localises to the lipid droplet. During postembryonic development, functions with endocytic adapter Eps-15 in neurons to restrain synaptic growth, by inhibiting BMP signaling, and to control synaptic endocytosis. Required presynaptically for neuromuscular junction (NMJ) neurotransmission. Inhibits neuronal BMP signaling by promoting endocytic internalization and subsequent endosomal trafficking of the BMP receptor wit. In this way, regulates the Fmr1 translational regulator controlling Futsch expression to modulate neuronal microtubule stability, which controls both synaptogenesis and neuronal survival. The polypeptide is Protein spartin (Drosophila melanogaster (Fruit fly)).